We begin with the raw amino-acid sequence, 360 residues long: Phospho-N-acetylmuramoyl-pentapeptide-transferase (360 aa).

10 consecutive transmembrane segments (helical) span residues 21-41 (YITV…LWIG), 73-93 (TMGG…WANL), 94-114 (ANSY…IGFV), 132-152 (WKYF…YWLG), 168-188 (IMPQ…VGTG), 199-219 (GLAI…AWAT), 239-259 (VVVF…FNTY), 263-283 (VFMG…VAIL), 288-308 (FLLV…ILQV), and 338-358 (VIIR…VTLK).

Belongs to the glycosyltransferase 4 family. MraY subfamily. The cofactor is Mg(2+).

The protein resides in the cell inner membrane. It carries out the reaction UDP-N-acetyl-alpha-D-muramoyl-L-alanyl-gamma-D-glutamyl-meso-2,6-diaminopimeloyl-D-alanyl-D-alanine + di-trans,octa-cis-undecaprenyl phosphate = di-trans,octa-cis-undecaprenyl diphospho-N-acetyl-alpha-D-muramoyl-L-alanyl-D-glutamyl-meso-2,6-diaminopimeloyl-D-alanyl-D-alanine + UMP. It participates in cell wall biogenesis; peptidoglycan biosynthesis. Its function is as follows. Catalyzes the initial step of the lipid cycle reactions in the biosynthesis of the cell wall peptidoglycan: transfers peptidoglycan precursor phospho-MurNAc-pentapeptide from UDP-MurNAc-pentapeptide onto the lipid carrier undecaprenyl phosphate, yielding undecaprenyl-pyrophosphoryl-MurNAc-pentapeptide, known as lipid I. This is Phospho-N-acetylmuramoyl-pentapeptide-transferase from Haemophilus influenzae (strain 86-028NP).